Consider the following 336-residue polypeptide: Hdr-like menaquinol oxidoreductase cytochrome b-like subunit (336 aa).

The next 6 membrane-spanning stretches (helical) occupy residues 4-24 (ALYIFYALPYICFAIFVIGTI), 60-80 (IDSPSSKFWAFVRVLFVVFLF), 102-122 (WLWLFAILFHYSLLVIVIRHL), 145-165 (VAIVPPLLMTGVIALVALAFL), 184-204 (HLILFFMAVILVSGLLMRYII), and 232-252 (LHWLFLIHFTFVCITIAYIPF).

Its subcellular location is the cell membrane. Its function is as follows. Has menaquinol-oxidizing activity. The HmeC and HmeD subunits may together mediate electron transfer from menaquinol to an unidentified electron acceptor on the cytoplasmic side of the membrane. This chain is Hdr-like menaquinol oxidoreductase cytochrome b-like subunit (hmeC), found in Archaeoglobus profundus (strain DSM 5631 / JCM 9629 / NBRC 100127 / Av18).